Here is a 413-residue protein sequence, read N- to C-terminus: Tyrosine--tRNA ligase (413 aa).

Residue Y34 participates in L-tyrosine binding. The 'HIGH' region motif lies at 39 to 48; it reads CTAQSLHVGN. 2 residues coordinate L-tyrosine: Y171 and Q175. A 'KMSKS' region motif is present at residues 231–235; it reads KMGKT. K234 is an ATP binding site. The region spanning 346 to 411 is the S4 RNA-binding domain; it reads IPITELLVTI…GKKCHILVKI (66 aa).

The protein belongs to the class-I aminoacyl-tRNA synthetase family. TyrS type 1 subfamily. Homodimer.

It localises to the cytoplasm. It catalyses the reaction tRNA(Tyr) + L-tyrosine + ATP = L-tyrosyl-tRNA(Tyr) + AMP + diphosphate + H(+). Functionally, catalyzes the attachment of tyrosine to tRNA(Tyr) in a two-step reaction: tyrosine is first activated by ATP to form Tyr-AMP and then transferred to the acceptor end of tRNA(Tyr). This is Tyrosine--tRNA ligase from Orientia tsutsugamushi (strain Ikeda) (Rickettsia tsutsugamushi).